We begin with the raw amino-acid sequence, 500 residues long: Beta-xylosidase (500 aa).

Glu160 functions as the Proton donor in the catalytic mechanism. The active-site Nucleophile is Glu277.

This sequence belongs to the glycosyl hydrolase 39 family.

The catalysed reaction is Hydrolysis of (1-&gt;4)-beta-D-xylans, to remove successive D-xylose residues from the non-reducing termini.. The sequence is that of Beta-xylosidase (xynB) from Thermoanaerobacterium saccharolyticum (strain DSM 8691 / JW/SL-YS485).